Consider the following 396-residue polypeptide: MNEAVIDPILETAVNTGDMFCSQTIPNRCLKDTILIEVQPECADTLQCVLDDKVSRHQPLLLRNHKKLELPSEKSVTRGGFYMQQLELLVKSAPPNEYALLLIQCKDTALADEDNFFVANGVIDAGYRGVISALLYYRPGVTVILPGHLTIYLFPVKLRQSRLLPKNVLKHLDPIFKSIQVQPLSNSPSNYEKPVISEFADISTVQQGQPLHRDSAEYHIDVPLTYKHIINPKRQEDAGYDICVPYNLYLKRNEFIKIVLPIIRDWDLQHPSINAYIFGRSSKSRSGIIVCPTAWPAGEHCKFYVYNLTGDDIRIKTGDRLAQVLLIDHNTQIHLKHNVLSNIAFPYAIRGKCGIPGVQWYFTKTLDLIATPSERGTRGFGSTDKETNDVDFLLKH.

Substrate is bound by residues 280–282 (RSS) and 380–381 (FG).

Belongs to the dUTPase family. Mg(2+) serves as cofactor.

The catalysed reaction is dUTP + H2O = dUMP + diphosphate + H(+). In terms of biological role, involved in nucleotide metabolism: produces dUMP, the immediate precursor of thymidine nucleotides and decreases the intracellular concentration of dUTP to avoid uracil incorporation into viral DNA. The sequence is that of Deoxyuridine 5'-triphosphate nucleotidohydrolase from Homo sapiens (Human).